Reading from the N-terminus, the 1699-residue chain is DNA polymerase (1699 aa).

2 consecutive DOD-type homing endonuclease domains span residues 770–903 (LLGY…SLGI) and 1222–1361 (LIGL…LVGV).

It belongs to the DNA polymerase type-B family. In terms of processing, this protein undergoes a protein self splicing that involves a post-translational excision of the intervening region (intein) followed by peptide ligation.

The catalysed reaction is DNA(n) + a 2'-deoxyribonucleoside 5'-triphosphate = DNA(n+1) + diphosphate. Its function is as follows. In addition to polymerase activity, this DNA polymerase exhibits 3' to 5' exonuclease activity. Functionally, PI-TspGE8I and PI-TspGE8II are endonucleases. The sequence is that of DNA polymerase (pol) from Thermococcus sp. (strain GE8).